The sequence spans 235 residues: Urease accessory protein UreF (235 aa).

It belongs to the UreF family. UreD, UreF and UreG form a complex that acts as a GTP-hydrolysis-dependent molecular chaperone, activating the urease apoprotein by helping to assemble the nickel containing metallocenter of UreC. The UreE protein probably delivers the nickel.

The protein localises to the cytoplasm. Required for maturation of urease via the functional incorporation of the urease nickel metallocenter. This is Urease accessory protein UreF from Psychrobacter cryohalolentis (strain ATCC BAA-1226 / DSM 17306 / VKM B-2378 / K5).